A 90-amino-acid chain; its full sequence is Small ribosomal subunit protein uS15c (90 aa).

The protein belongs to the universal ribosomal protein uS15 family. In terms of assembly, part of the 30S ribosomal subunit.

The protein localises to the plastid. It localises to the chloroplast. The protein is Small ribosomal subunit protein uS15c (rps15) of Drimys granadensis.